Consider the following 615-residue polypeptide: Elongation factor 4 (615 aa).

One can recognise a tr-type G domain in the interval 14 to 200; sequence SRIRNFCIIA…KVVELIPAPS (187 aa). GTP contacts are provided by residues 26–31 and 147–150; these read DHGKST and NKID.

This sequence belongs to the TRAFAC class translation factor GTPase superfamily. Classic translation factor GTPase family. LepA subfamily.

It is found in the cell membrane. The enzyme catalyses GTP + H2O = GDP + phosphate + H(+). Its function is as follows. Required for accurate and efficient protein synthesis under certain stress conditions. May act as a fidelity factor of the translation reaction, by catalyzing a one-codon backward translocation of tRNAs on improperly translocated ribosomes. Back-translocation proceeds from a post-translocation (POST) complex to a pre-translocation (PRE) complex, thus giving elongation factor G a second chance to translocate the tRNAs correctly. Binds to ribosomes in a GTP-dependent manner. This Corynebacterium efficiens (strain DSM 44549 / YS-314 / AJ 12310 / JCM 11189 / NBRC 100395) protein is Elongation factor 4.